The following is a 226-amino-acid chain: ATP synthase subunit a (226 aa).

The next 5 membrane-spanning stretches (helical) occupy residues 20-40 (LNWLSTFLGLLLIPFSFWLLP), 74-94 (FISLFSLIMFNNFLGLFPYIF), 100-120 (LTLTLALAFPLWLSFMLYGWI), 158-180 (LAVRLTANMIAGHLLLTLLGNTG), and 197-217 (IALLVLESAVAIIQSYVFAVL).

This sequence belongs to the ATPase A chain family. F-type ATPases have 2 components, CF(1) - the catalytic core - and CF(0) - the membrane proton channel. CF(1) has five subunits: alpha(3), beta(3), gamma(1), delta(1), epsilon(1). CF(0) has three main subunits: a, b and c.

The protein localises to the mitochondrion inner membrane. Functionally, mitochondrial membrane ATP synthase (F(1)F(0) ATP synthase or Complex V) produces ATP from ADP in the presence of a proton gradient across the membrane which is generated by electron transport complexes of the respiratory chain. F-type ATPases consist of two structural domains, F(1) - containing the extramembraneous catalytic core and F(0) - containing the membrane proton channel, linked together by a central stalk and a peripheral stalk. During catalysis, ATP synthesis in the catalytic domain of F(1) is coupled via a rotary mechanism of the central stalk subunits to proton translocation. Key component of the proton channel; it may play a direct role in the translocation of protons across the membrane. In Anopheles quadrimaculatus (Common malaria mosquito), this protein is ATP synthase subunit a (ATP6).